Here is a 269-residue protein sequence, read N- to C-terminus: tRNA uridine(34) hydroxylase (269 aa).

The 95-residue stretch at 122-216 (QDPEVVLIDV…YLEAIAPEEN (95 aa)) folds into the Rhodanese domain. Catalysis depends on Cys176, which acts as the Cysteine persulfide intermediate.

This sequence belongs to the TrhO family.

The enzyme catalyses uridine(34) in tRNA + AH2 + O2 = 5-hydroxyuridine(34) in tRNA + A + H2O. Catalyzes oxygen-dependent 5-hydroxyuridine (ho5U) modification at position 34 in tRNAs. The sequence is that of tRNA uridine(34) hydroxylase from Synechococcus elongatus (strain ATCC 33912 / PCC 7942 / FACHB-805) (Anacystis nidulans R2).